We begin with the raw amino-acid sequence, 466 residues long: Neuraminidase (466 aa).

The Intravirion portion of the chain corresponds to 1 to 11; it reads MLPSTIQTLTL. A helical transmembrane segment spans residues 12-34; it reads FLTSGGVLLSLYVSASLSYLLYS. The involved in apical transport and lipid raft association stretch occupies residues 13-35; the sequence is LTSGGVLLSLYVSASLSYLLYSD. Topologically, residues 35–466 are virion surface; sequence DILLKFSPTK…DTVTGVDMAL (432 aa). Residues 38 to 86 form a hypervariable stalk region region; it reads LKFSPTKRTAPTMSLECVNVSNAQAVNHSATKEMTFLLPEPEWTYPRLS. Residues N56 and N64 are each glycosylated (N-linked (GlcNAc...) asparagine; by host). Disulfide bonds link C87/C420, C122/C127, C182/C229, C231/C236, C277/C291, C279/C289, C318/C337, and C424/C447. Residues 89 to 466 are head of neuraminidase; the sequence is GSTFQKALLI…DTVTGVDMAL (378 aa). R116 is a substrate binding site. A glycan (N-linked (GlcNAc...) asparagine; by host) is linked at N144. The Proton donor/acceptor role is filled by D149. R150 is a binding site for substrate. Position 275 to 276 (275 to 276) interacts with substrate; sequence EE. N284 carries N-linked (GlcNAc...) asparagine; by host glycosylation. R292 is a substrate binding site. The Ca(2+) site is built by D293 and D324. Position 374 (R374) interacts with substrate. Y409 (nucleophile) is an active-site residue.

Belongs to the glycosyl hydrolase 34 family. Homotetramer. Ca(2+) is required as a cofactor. In terms of processing, N-glycosylated.

The protein resides in the virion membrane. It localises to the host apical cell membrane. The catalysed reaction is Hydrolysis of alpha-(2-&gt;3)-, alpha-(2-&gt;6)-, alpha-(2-&gt;8)- glycosidic linkages of terminal sialic acid residues in oligosaccharides, glycoproteins, glycolipids, colominic acid and synthetic substrates.. With respect to regulation, inhibited by the neuraminidase inhibitors zanamivir (Relenza) and oseltamivir (Tamiflu). These drugs interfere with the release of progeny virus from infected cells and are effective against all influenza strains. Resistance to neuraminidase inhibitors is quite rare. In terms of biological role, catalyzes the removal of terminal sialic acid residues from viral and cellular glycoconjugates. Cleaves off the terminal sialic acids on the glycosylated HA during virus budding to facilitate virus release. Additionally helps virus spread through the circulation by further removing sialic acids from the cell surface. These cleavages prevent self-aggregation and ensure the efficient spread of the progeny virus from cell to cell. Otherwise, infection would be limited to one round of replication. Described as a receptor-destroying enzyme because it cleaves a terminal sialic acid from the cellular receptors. May facilitate viral invasion of the upper airways by cleaving the sialic acid moieties on the mucin of the airway epithelial cells. Likely to plays a role in the budding process through its association with lipid rafts during intracellular transport. May additionally display a raft-association independent effect on budding. Plays a role in the determination of host range restriction on replication and virulence. Sialidase activity in late endosome/lysosome traffic seems to enhance virus replication. In Influenza B virus (strain B/Maryland/1959), this protein is Neuraminidase.